The sequence spans 123 residues: KEDSCQLGYSQGPCLGMFKRYFYNGTSMACETFYYGGCMGNGNNFPSEKECLQTCRTVQACNLPIVRGPCRAGIELWAFDAVKGKCVRFIYGGCNGNGNQFYSQKECKEYCGIPGEADEELLR.

BPTI/Kunitz inhibitor domains lie at 5-55 (CQLG…LQTC) and 61-111 (CNLP…KEYC). 6 disulfides stabilise this stretch: Cys5–Cys55, Cys14–Cys38, Cys30–Cys51, Cys61–Cys111, Cys70–Cys94, and Cys86–Cys107. N-linked (GlcNAc...) asparagine glycosylation occurs at Asn24.

The protein localises to the secreted. In terms of biological role, this inhibitory fragment, released from native ITI after limited proteolysis with trypsin, contains two homologous domains. Whereas the second domain is a strong inhibitor of trypsin, the first domain interacts weakly with PMN-granulocytic elastase and not at all with pancreatic elastase. In Capra hircus (Goat), this protein is Inter-alpha-trypsin inhibitor.